The primary structure comprises 238 residues: Flagellar L-ring protein (238 aa).

The first 16 residues, 1 to 16, serve as a signal peptide directing secretion; the sequence is MNKAILAVAMVLLLAG. Cys-17 carries N-palmitoyl cysteine lipidation. The S-diacylglycerol cysteine moiety is linked to residue Cys-17.

Belongs to the FlgH family. As to quaternary structure, the basal body constitutes a major portion of the flagellar organelle and consists of four rings (L,P,S, and M) mounted on a central rod.

Its subcellular location is the cell outer membrane. It is found in the bacterial flagellum basal body. Its function is as follows. Assembles around the rod to form the L-ring and probably protects the motor/basal body from shearing forces during rotation. This is Flagellar L-ring protein from Brucella melitensis biotype 2 (strain ATCC 23457).